A 124-amino-acid polypeptide reads, in one-letter code: Ribonuclease P protein component (124 aa).

This sequence belongs to the RnpA family. As to quaternary structure, consists of a catalytic RNA component (M1 or rnpB) and a protein subunit.

The catalysed reaction is Endonucleolytic cleavage of RNA, removing 5'-extranucleotides from tRNA precursor.. Its function is as follows. RNaseP catalyzes the removal of the 5'-leader sequence from pre-tRNA to produce the mature 5'-terminus. It can also cleave other RNA substrates such as 4.5S RNA. The protein component plays an auxiliary but essential role in vivo by binding to the 5'-leader sequence and broadening the substrate specificity of the ribozyme. The sequence is that of Ribonuclease P protein component from Maridesulfovibrio salexigens (strain ATCC 14822 / DSM 2638 / NCIMB 8403 / VKM B-1763) (Desulfovibrio salexigens).